Consider the following 96-residue polypeptide: Co-chaperonin GroES (96 aa).

The protein belongs to the GroES chaperonin family. In terms of assembly, heptamer of 7 subunits arranged in a ring. Interacts with the chaperonin GroEL.

It localises to the cytoplasm. Together with the chaperonin GroEL, plays an essential role in assisting protein folding. The GroEL-GroES system forms a nano-cage that allows encapsulation of the non-native substrate proteins and provides a physical environment optimized to promote and accelerate protein folding. GroES binds to the apical surface of the GroEL ring, thereby capping the opening of the GroEL channel. This chain is Co-chaperonin GroES, found in Aggregatibacter actinomycetemcomitans (Actinobacillus actinomycetemcomitans).